The primary structure comprises 248 residues: Triosephosphate isomerase (248 aa).

9–11 serves as a coordination point for substrate; that stretch reads NWK. H94 (electrophile) is an active-site residue. Catalysis depends on E166, which acts as the Proton acceptor. Residues G172, S212, and 233–234 contribute to the substrate site; that span reads GG.

The protein belongs to the triosephosphate isomerase family. In terms of assembly, homodimer.

The protein localises to the cytoplasm. It catalyses the reaction D-glyceraldehyde 3-phosphate = dihydroxyacetone phosphate. It participates in carbohydrate biosynthesis; gluconeogenesis. It functions in the pathway carbohydrate degradation; glycolysis; D-glyceraldehyde 3-phosphate from glycerone phosphate: step 1/1. In terms of biological role, involved in the gluconeogenesis. Catalyzes stereospecifically the conversion of dihydroxyacetone phosphate (DHAP) to D-glyceraldehyde-3-phosphate (G3P). This chain is Triosephosphate isomerase, found in Alkaliphilus metalliredigens (strain QYMF).